Consider the following 454-residue polypeptide: uncharacterized protein (454 aa).

This is an uncharacterized protein from Rickettsia prowazekii (strain Madrid E).